Reading from the N-terminus, the 78-residue chain is Large ribosomal subunit protein bL28 (78 aa).

The interval 1-21 (MSRVCQVTGKKPMVGNNRSHA) is disordered.

The protein belongs to the bacterial ribosomal protein bL28 family.

The protein is Large ribosomal subunit protein bL28 of Shewanella piezotolerans (strain WP3 / JCM 13877).